The sequence spans 405 residues: Na(+)-translocating NADH-quinone reductase subunit F (405 aa).

A helical membrane pass occupies residues I3–F23. One can recognise a 2Fe-2S ferredoxin-type domain in the interval G32–V124. [2Fe-2S] cluster contacts are provided by C67, C73, C76, and C108. Residues V127–K267 enclose the FAD-binding FR-type domain. The tract at residues D270 to M387 is catalytic.

It belongs to the NqrF family. Composed of six subunits; NqrA, NqrB, NqrC, NqrD, NqrE and NqrF. [2Fe-2S] cluster is required as a cofactor. The cofactor is FAD.

It is found in the cell inner membrane. It carries out the reaction a ubiquinone + n Na(+)(in) + NADH + H(+) = a ubiquinol + n Na(+)(out) + NAD(+). In terms of biological role, NQR complex catalyzes the reduction of ubiquinone-1 to ubiquinol by two successive reactions, coupled with the transport of Na(+) ions from the cytoplasm to the periplasm. The first step is catalyzed by NqrF, which accepts electrons from NADH and reduces ubiquinone-1 to ubisemiquinone by a one-electron transfer pathway. The polypeptide is Na(+)-translocating NADH-quinone reductase subunit F (Neisseria meningitidis serogroup B (strain ATCC BAA-335 / MC58)).